We begin with the raw amino-acid sequence, 295 residues long: Lipase 2 (295 aa).

The N-terminal stretch at Met-1–Ala-31 is a signal peptide. Ser-48 acts as the Nucleophile in catalysis. 3 cysteine pairs are disulfide-bonded: Cys-65/Cys-89, Cys-138/Cys-152, and Cys-205/Cys-254. His-275 is an active-site residue.

This sequence belongs to the 'GDSL' lipolytic enzyme family. In terms of assembly, monomer.

It localises to the secreted. It catalyses the reaction a triacylglycerol + H2O = a diacylglycerol + a fatty acid + H(+). With respect to regulation, strongly inhibited by Ag(+). The cations Ca(2+) and Mg(2+) do not significantly reduce the lipolytic activity of SCO7513, whereas high concentrations of Co(2+) and Cu(2+) partially inhibit it. Is not inhibited by DTT in vitro. Is resistant to PMSF inhibition, except in the presence of Ca(2+). Functionally, catalyzes the hydrolysis of fatty acid esters with a preference for long chain fatty acids (C16-C18). In Streptomyces coelicolor (strain ATCC BAA-471 / A3(2) / M145), this protein is Lipase 2.